A 133-amino-acid polypeptide reads, in one-letter code: Large-conductance mechanosensitive channel (133 aa).

Transmembrane regions (helical) follow at residues 10 to 30 (FAVKGNVMDMAVGVIIGGAFG) and 76 to 96 (GAFIQNIFDFLIIAIAVFSMV).

The protein belongs to the MscL family. As to quaternary structure, homopentamer.

The protein localises to the cell inner membrane. Channel that opens in response to stretch forces in the membrane lipid bilayer. May participate in the regulation of osmotic pressure changes within the cell. The chain is Large-conductance mechanosensitive channel from Haemophilus ducreyi (strain 35000HP / ATCC 700724).